The primary structure comprises 94 residues: Aspartyl/glutamyl-tRNA(Asn/Gln) amidotransferase subunit C (94 aa).

The segment at 72–94 is disordered; the sequence is PREKALQGAPEVSEGQFKVPRVV.

This sequence belongs to the GatC family. Heterotrimer of A, B and C subunits.

The enzyme catalyses L-glutamyl-tRNA(Gln) + L-glutamine + ATP + H2O = L-glutaminyl-tRNA(Gln) + L-glutamate + ADP + phosphate + H(+). It carries out the reaction L-aspartyl-tRNA(Asn) + L-glutamine + ATP + H2O = L-asparaginyl-tRNA(Asn) + L-glutamate + ADP + phosphate + 2 H(+). Functionally, allows the formation of correctly charged Asn-tRNA(Asn) or Gln-tRNA(Gln) through the transamidation of misacylated Asp-tRNA(Asn) or Glu-tRNA(Gln) in organisms which lack either or both of asparaginyl-tRNA or glutaminyl-tRNA synthetases. The reaction takes place in the presence of glutamine and ATP through an activated phospho-Asp-tRNA(Asn) or phospho-Glu-tRNA(Gln). The protein is Aspartyl/glutamyl-tRNA(Asn/Gln) amidotransferase subunit C of Moorella thermoacetica (strain ATCC 39073 / JCM 9320).